The following is a 68-amino-acid chain: Peptide Hp1090 (68 aa).

The first 23 residues, 1-23, serve as a signal peptide directing secretion; the sequence is MKTQFAIFLITLVLFQMFSQSDA. Phenylalanine 36 carries the phenylalanine amide modification. Residues 40-68 constitute a propeptide that is removed on maturation; it reads GLSDLDDLDESFDGEVSQADIDFLKELMQ.

Belongs to the non-disulfide-bridged peptide (NDBP) superfamily. Short antimicrobial peptide (group 4) family. As to expression, expressed by the venom gland.

Its subcellular location is the secreted. The protein resides in the target cell membrane. Amphipathic peptide which inhibits the growth of Gram-positive bacteria. This chain is Peptide Hp1090, found in Heterometrus petersii (Asian forest scorpion).